The primary structure comprises 221 residues: ATP-dependent Clp protease proteolytic subunit 3 (221 aa).

Ser118 serves as the catalytic Nucleophile. The active site involves His143.

It belongs to the peptidase S14 family. As to quaternary structure, fourteen ClpP subunits assemble into 2 heptameric rings which stack back to back to give a disk-like structure with a central cavity, resembling the structure of eukaryotic proteasomes.

It localises to the cytoplasm. It catalyses the reaction Hydrolysis of proteins to small peptides in the presence of ATP and magnesium. alpha-casein is the usual test substrate. In the absence of ATP, only oligopeptides shorter than five residues are hydrolyzed (such as succinyl-Leu-Tyr-|-NHMec, and Leu-Tyr-Leu-|-Tyr-Trp, in which cleavage of the -Tyr-|-Leu- and -Tyr-|-Trp bonds also occurs).. In terms of biological role, cleaves peptides in various proteins in a process that requires ATP hydrolysis. Has a chymotrypsin-like activity. Plays a major role in the degradation of misfolded proteins. The sequence is that of ATP-dependent Clp protease proteolytic subunit 3 from Nocardia farcinica (strain IFM 10152).